Here is a 241-residue protein sequence, read N- to C-terminus: Proteasome subunit alpha (241 aa).

Belongs to the peptidase T1A family. The 20S proteasome core is composed of 14 alpha and 14 beta subunits that assemble into four stacked heptameric rings, resulting in a barrel-shaped structure. The two inner rings, each composed of seven catalytic beta subunits, are sandwiched by two outer rings, each composed of seven alpha subunits. The catalytic chamber with the active sites is on the inside of the barrel. Has a gated structure, the ends of the cylinder being occluded by the N-termini of the alpha-subunits. Is capped at one or both ends by the proteasome regulatory ATPase, PAN.

It localises to the cytoplasm. With respect to regulation, the formation of the proteasomal ATPase PAN-20S proteasome complex, via the docking of the C-termini of PAN into the intersubunit pockets in the alpha-rings, triggers opening of the gate for substrate entry. Interconversion between the open-gate and close-gate conformations leads to a dynamic regulation of the 20S proteasome proteolysis activity. Functionally, component of the proteasome core, a large protease complex with broad specificity involved in protein degradation. This is Proteasome subunit alpha from Methanosphaerula palustris (strain ATCC BAA-1556 / DSM 19958 / E1-9c).